The following is a 668-amino-acid chain: Potassium-transporting ATPase ATP-binding subunit (668 aa).

4 helical membrane-spanning segments follow: residues 31-51 (MFLT…PSFF), 62-82 (FYVA…ISTA), 213-233 (TVFL…IFAI), and 243-263 (IVML…ALLP). The active-site 4-aspartylphosphate intermediate is the D298. ATP-binding positions include D335, E339, 367–374 (FSSETKFS), and K385. Mg(2+)-binding residues include D504 and D508. 3 helical membrane passes run 573–593 (YFVI…VNIL), 599–619 (IVAV…LIPL), and 644–664 (IGGV…LIAW).

Belongs to the cation transport ATPase (P-type) (TC 3.A.3) family. Type IA subfamily. As to quaternary structure, the system is composed of three essential subunits: KdpA, KdpB and KdpC.

It localises to the cell membrane. The enzyme catalyses K(+)(out) + ATP + H2O = K(+)(in) + ADP + phosphate + H(+). Part of the high-affinity ATP-driven potassium transport (or Kdp) system, which catalyzes the hydrolysis of ATP coupled with the electrogenic transport of potassium into the cytoplasm. This subunit is responsible for energy coupling to the transport system and for the release of the potassium ions to the cytoplasm. This is Potassium-transporting ATPase ATP-binding subunit from Thermoplasma volcanium (strain ATCC 51530 / DSM 4299 / JCM 9571 / NBRC 15438 / GSS1).